A 75-amino-acid polypeptide reads, in one-letter code: Small ribosomal subunit protein bS18 (75 aa).

This sequence belongs to the bacterial ribosomal protein bS18 family. Part of the 30S ribosomal subunit. Forms a tight heterodimer with protein bS6.

In terms of biological role, binds as a heterodimer with protein bS6 to the central domain of the 16S rRNA, where it helps stabilize the platform of the 30S subunit. This is Small ribosomal subunit protein bS18 from Mycoplasma mycoides subsp. mycoides SC (strain CCUG 32753 / NCTC 10114 / PG1).